Consider the following 374-residue polypeptide: Glutamate 5-kinase (374 aa).

K13 is an ATP binding site. Substrate contacts are provided by S54, D141, and N153. An ATP-binding site is contributed by 173–174 (SD). The PUA domain maps to 278–355 (KGTVHLDSGA…NEIESVLGYP (78 aa)).

This sequence belongs to the glutamate 5-kinase family.

The protein resides in the cytoplasm. The catalysed reaction is L-glutamate + ATP = L-glutamyl 5-phosphate + ADP. Its pathway is amino-acid biosynthesis; L-proline biosynthesis; L-glutamate 5-semialdehyde from L-glutamate: step 1/2. Functionally, catalyzes the transfer of a phosphate group to glutamate to form L-glutamate 5-phosphate. In Roseobacter denitrificans (strain ATCC 33942 / OCh 114) (Erythrobacter sp. (strain OCh 114)), this protein is Glutamate 5-kinase.